Reading from the N-terminus, the 292-residue chain is NAD kinase (292 aa).

The active-site Proton acceptor is Asp-73. Residues 73–74 (DG), 147–148 (NE), His-158, Arg-175, Asp-177, 188–193 (TAYSLS), and Gln-247 contribute to the NAD(+) site.

This sequence belongs to the NAD kinase family. The cofactor is a divalent metal cation.

The protein resides in the cytoplasm. The catalysed reaction is NAD(+) + ATP = ADP + NADP(+) + H(+). Involved in the regulation of the intracellular balance of NAD and NADP, and is a key enzyme in the biosynthesis of NADP. Catalyzes specifically the phosphorylation on 2'-hydroxyl of the adenosine moiety of NAD to yield NADP. This is NAD kinase from Salmonella choleraesuis (strain SC-B67).